Reading from the N-terminus, the 500-residue chain is NAD(P)H-quinone oxidoreductase chain 4, chloroplastic (500 aa).

A run of 13 helical transmembrane segments spans residues 4 to 24 (FPWLTIIVVFPIFAGSLIFFL), 35 to 55 (YTICICILELLLTTYAFCYHF), 87 to 107 (IGPILLTGFITTLATLAAWPV), 134 to 154 (LLLFFIMWELELIPVYLLLAM), 167 to 187 (FILYTAGGSVFLLMGVLGVAL), 208 to 228 (VLEIIFYIGFFIAFAVKSPII), 242 to 262 (HYSTCMLLAGILLKMGAYGLI), 272 to 292 (AHSIFSPWLMIIGTIQIIYAA), 305 to 325 (IAYPSVSHMGFIIIGISSLTD), 330 to 350 (GALLQIISHGFIGAALFFLAG), 386 to 406 (LALPGMSGFVAELIVFFGIIT), 411 to 431 (LLIPKLLITFVMAIGIILTPI), and 462 to 482 (LFLSISIFLPVIGIGIYPDFV).

Belongs to the complex I subunit 4 family.

The protein resides in the plastid. It localises to the chloroplast thylakoid membrane. The catalysed reaction is a plastoquinone + NADH + (n+1) H(+)(in) = a plastoquinol + NAD(+) + n H(+)(out). The enzyme catalyses a plastoquinone + NADPH + (n+1) H(+)(in) = a plastoquinol + NADP(+) + n H(+)(out). The protein is NAD(P)H-quinone oxidoreductase chain 4, chloroplastic of Solanum tuberosum (Potato).